Reading from the N-terminus, the 345-residue chain is Trace amine-associated receptor 6 (345 aa).

Residues 1–32 lie on the Extracellular side of the membrane; sequence MSSNSSLLVAVQLCYANVNGSCVKIPFSPGSR. N-linked (GlcNAc...) asparagine glycans are attached at residues asparagine 4 and asparagine 19. Cystine bridges form between cysteine 22–cysteine 186 and cysteine 105–cysteine 190. Residues 33 to 53 form a helical membrane-spanning segment; that stretch reads VILYIVFGFGAVLAVFGNLLV. Residues 54 to 68 are Cytoplasmic-facing; it reads MISILHFKQLHSPTN. The helical transmembrane segment at 69–89 threads the bilayer; it reads FLVASLACADFLVGVTVMPFS. Topologically, residues 90–107 are extracellular; that stretch reads MVRTVESCWYFGRSFCTF. Residues 108-128 traverse the membrane as a helical segment; the sequence is HTCCDVAFCYSSLFHLCFISI. Over 129 to 147 the chain is Cytoplasmic; it reads DRYIAVTDPLVYPTKFTVS. Residues 148–168 form a helical membrane-spanning segment; sequence VSGICISVSWILPLMYSGAVF. Residues 169-202 are Extracellular-facing; sequence YTGVYDDGLEELSDALNCIGGCQTVVNQNWVLTD. A helical transmembrane segment spans residues 203-223; it reads FLSFFIPTFIMIILYGNIFLV. Topologically, residues 224–259 are cytoplasmic; that stretch reads ARRQAKKIENTGSKTESSSESYKARVARRERKAAKT. The helical transmembrane segment at 260-276 threads the bilayer; the sequence is LGVTVVAFMISWLPYSI. The Extracellular portion of the chain corresponds to 277-282; it reads DSLIDA. A helical transmembrane segment spans residues 283-302; the sequence is FMGFITPACIYEICCWCAYY. The Cytoplasmic segment spans residues 303-345; that stretch reads NSAMNPLIYALFYPWFRKAIKVIVTGQVLKNSSATMNLFSEHI.

It belongs to the G-protein coupled receptor 1 family. In terms of tissue distribution, expressed at low abundance in various brain tissues, as well as in fetal liver, but not in the cerebellum or placenta. In the brain, comparable levels of expression in basal ganglia, frontal cortex, substantia nigra, amygdala and hippocampus, highest expression in hippocampus and lowest expression in basal ganglia.

The protein resides in the cell membrane. In terms of biological role, olfactory receptor specific for trace amines, such as beta-phenylethylamine (beta-PEA). Trace amine compounds are enriched in animal body fluids and act on trace amine-associated receptors (TAARs) to elicit both intraspecific and interspecific innate behaviors. Beta-PEA-binding causes a conformation change that triggers signaling via G(s)-class of G alpha proteins (GNAL or GNAS). This chain is Trace amine-associated receptor 6, found in Homo sapiens (Human).